The chain runs to 1122 residues: Protein phosphatase 1 regulatory subunit 3A (1122 aa).

Positions 32-58 are disordered; that stretch reads TFQPGFSPQPSRRGSDSSEDIYLDTPS. 2 positions are modified to phosphoserine; by GSK3: S38 and S42. S46 is modified (phosphoserine; by PKA and ISPK). S49 carries the phosphoserine modification. T56 bears the Phosphothreonine mark. The short motif at 62 to 65 is the PP1-binding motif element; sequence RRVS. Residue S65 is modified to Phosphoserine; by PKA. Residues 122 to 230 enclose the CBM21 domain; that stretch reads QLQIQKAILE…NNNGTNYTFI (109 aa). Disordered regions lie at residues 332-351, 395-422, 496-516, and 640-668; these read STASRDERNTFSTDPVNFPN, SSGDDCTHQPSEETTSNMGEIKPSLGDT, CLKESTEEGSSKEDYYGNGKD, and GINSEDQDNSPQHKQSWNVLESQGKSREN. Basic and acidic residues-rich tracts occupy residues 395 to 405 and 499 to 516; these read SSGDDCTHQPS and ESTEEGSSKEDYYGNGKD. The span at 640–662 shows a compositional bias: polar residues; sequence GINSEDQDNSPQHKQSWNVLESQ. S844 carries the post-translational modification Phosphoserine. Residues 963–977 show a composition bias toward basic and acidic residues; sequence IEKHPYPESKPEEVS. 2 disordered regions span residues 963 to 983 and 1025 to 1058; these read IEKHPYPESKPEEVSRSSGIV and RHENEGLVSSGQSLYTSGEKESDSSASTSLPVEE. Polar residues-rich tracts occupy residues 1031 to 1040 and 1048 to 1058; these read LVSSGQSLYT and SSASTSLPVEE. A helical transmembrane segment spans residues 1078–1098; it reads YFLLFLIFLITVYHYDLMIGL.

As to quaternary structure, interacts with PPP1CC catalytic subunit of PP1, and associates with glycogen. Phosphorylation at Ser-46 by ISPK stimulates the dephosphorylation of glycogen synthase and phosphorylase kinase. Skeletal muscle and heart.

It localises to the membrane. Its function is as follows. Seems to act as a glycogen-targeting subunit for PP1. PP1 is essential for cell division, and participates in the regulation of glycogen metabolism, muscle contractility and protein synthesis. Plays an important role in glycogen synthesis but is not essential for insulin activation of glycogen synthase. The chain is Protein phosphatase 1 regulatory subunit 3A (PPP1R3A) from Homo sapiens (Human).